Reading from the N-terminus, the 889-residue chain is Valine--tRNA ligase (889 aa).

Positions 50–60 (PNVTGKLHLGH) match the 'HIGH' region motif. The 'KMSKS' region signature appears at 532-536 (KMSKS). Lysine 535 is a binding site for ATP. Residues 816–889 (LAELVDLDEE…QRLVDIKAEA (74 aa)) are a coiled coil.

The protein belongs to the class-I aminoacyl-tRNA synthetase family. ValS type 1 subfamily. In terms of assembly, monomer.

It is found in the cytoplasm. The catalysed reaction is tRNA(Val) + L-valine + ATP = L-valyl-tRNA(Val) + AMP + diphosphate. Functionally, catalyzes the attachment of valine to tRNA(Val). As ValRS can inadvertently accommodate and process structurally similar amino acids such as threonine, to avoid such errors, it has a 'posttransfer' editing activity that hydrolyzes mischarged Thr-tRNA(Val) in a tRNA-dependent manner. The chain is Valine--tRNA ligase from Lactiplantibacillus plantarum (strain ATCC BAA-793 / NCIMB 8826 / WCFS1) (Lactobacillus plantarum).